Here is a 439-residue protein sequence, read N- to C-terminus: Ectonucleotide pyrophosphatase/phosphodiesterase family member 7 (439 aa).

The first 21 residues, 1-21 (MGHSAVLLSVALVILPACVTG), serve as a signal peptide directing secretion. At 22 to 422 (GPVQRQQQHK…RSGSPLSRQH (401 aa)) the chain is on the extracellular side. Zn(2+)-binding residues include Asp38 and Thr74. The segment at 71-77 (VTMTSPC) is required for enzyme activity. Residue Thr74 is the Nucleophile of the active site. Substrate is bound at residue Asn95. Residues Asn99, Asn120, Asn145, and Asn167 are each glycosylated (N-linked (GlcNAc...) asparagine). Residues Asp198, His202, Asp245, and His246 each coordinate Zn(2+). Asn266 carries an N-linked (GlcNAc...) asparagine glycan. His352 lines the Zn(2+) pocket. Residues 423–439 (HLVVVLMGILTGLAKVV) form a helical membrane-spanning segment.

Belongs to the nucleotide pyrophosphatase/phosphodiesterase family. Zn(2+) is required as a cofactor. N-glycosylated; required for activity and transport to the plasma membrane. In terms of tissue distribution, detected in small intestine (at protein level). Highly expressed in the jejunum.

Its subcellular location is the cell membrane. The enzyme catalyses a sphingomyelin + H2O = phosphocholine + an N-acylsphing-4-enine + H(+). It carries out the reaction a 1-O-alkyl-2-acetyl-sn-glycero-3-phosphocholine + H2O = a 1-O-alkyl-2-acetyl-sn-glycerol + phosphocholine + H(+). It catalyses the reaction 1-O-octadecyl-2-acetyl-sn-glycero-3-phosphocholine + H2O = 1-O-octadecyl-2-acetyl-sn-glycerol + phosphocholine + H(+). The catalysed reaction is 1-hexadecanoyl-sn-glycero-3-phosphocholine + H2O = 1-hexadecanoyl-sn-glycerol + phosphocholine + H(+). With respect to regulation, platelet-activating factor hydrolysis is inhibited by higher amount of sphingomyelin. The hydrolysis of platelet-activating factor and sphingomyelin can be inhibited by the presence of sphingomyelin and platelet-activating factor respectively, the inhibition of platelet-activating factor hydrolysis by sphingomyelin being stronger. PAF hydrolysis is dose-dependently increased by both taurocholate (TC) and taurodeoxycholate (TDC). Hydrolase activity against PAF is inhibited by EDTA and stimulated by 0.1-0.25 mM Zn2+. Functionally, choline-specific phosphodiesterase that hydrolyzes sphingomyelin (SM) releasing the ceramide and phosphocholine and therefore is involved in sphingomyelin digestion, ceramide formation, and fatty acid (FA) absorption in the gastrointestinal tract. Also has phospholipase C activity and can also cleave phosphocholine from palmitoyl lyso-phosphatidylcholine and platelet-activating factor (PAF) leading to its inactivation. Does not have nucleotide pyrophosphatase activity. May promote cholesterol absorption by affecting the levels of sphingomyelin derived from either diet or endogenous sources, in the intestinal lumen. The protein is Ectonucleotide pyrophosphatase/phosphodiesterase family member 7 of Rattus norvegicus (Rat).